A 562-amino-acid polypeptide reads, in one-letter code: DNA ligase (562 aa).

Glu-250 contributes to the ATP binding site. The active-site N6-AMP-lysine intermediate is Lys-252. ATP contacts are provided by Arg-257, Arg-272, Glu-302, Phe-342, Arg-417, and Lys-423.

This sequence belongs to the ATP-dependent DNA ligase family. Mg(2+) serves as cofactor. Requires Zn(2+) as cofactor.

It carries out the reaction ATP + (deoxyribonucleotide)n-3'-hydroxyl + 5'-phospho-(deoxyribonucleotide)m = (deoxyribonucleotide)n+m + AMP + diphosphate.. The enzyme catalyses NAD(+) + (deoxyribonucleotide)n-3'-hydroxyl + 5'-phospho-(deoxyribonucleotide)m = (deoxyribonucleotide)n+m + AMP + beta-nicotinamide D-nucleotide.. In terms of biological role, DNA ligase that seals nicks in double-stranded DNA during DNA replication, DNA recombination and DNA repair. Can use both ATP and NAD(+), but NAD(+) may be a preferred nucleotide cofactor. This is DNA ligase from Thermococcus onnurineus (strain NA1).